The chain runs to 174 residues: 2-oxo-4-hydroxy-4-carboxy-5-ureidoimidazoline decarboxylase (174 aa).

The active-site Proton donor is the His-67. Residues Pro-68, Ser-84–Gln-88, and Phe-119–Ala-123 each bind substrate. Positions Thr-172–Leu-174 match the Microbody targeting signal motif.

It belongs to the OHCU decarboxylase family. As to quaternary structure, homodimer.

It localises to the peroxisome. It catalyses the reaction 5-hydroxy-2-oxo-4-ureido-2,5-dihydro-1H-imidazole-5-carboxylate + H(+) = (S)-allantoin + CO2. It participates in purine metabolism; urate degradation; (S)-allantoin from urate: step 3/3. Its function is as follows. Catalyzes the stereoselective decarboxylation of 2-oxo-4-hydroxy-4-carboxy-5-ureidoimidazoline (OHCU) to (S)-allantoin. This is 2-oxo-4-hydroxy-4-carboxy-5-ureidoimidazoline decarboxylase (urad) from Danio rerio (Zebrafish).